The sequence spans 341 residues: Thymidine kinase (341 aa).

Residue 19-26 participates in ATP binding; the sequence is GAYGIGKT. Residue Glu-48 is the Proton acceptor of the active site. 2 residues coordinate substrate: Tyr-66 and Gln-90. Arg-183 contacts ATP. A substrate-binding site is contributed by Arg-189.

The protein belongs to the herpesviridae thymidine kinase family. Homodimer.

It catalyses the reaction thymidine + ATP = dTMP + ADP + H(+). Functionally, catalyzes the transfer of the gamma-phospho group of ATP to thymidine to generate dTMP in the salvage pathway of pyrimidine synthesis. The dTMP serves as a substrate for DNA polymerase during viral DNA replication. Allows the virus to be reactivated and to grow in non-proliferative cells lacking a high concentration of phosphorylated nucleic acid precursors. This chain is Thymidine kinase, found in Varicella-zoster virus (strain Dumas) (HHV-3).